Here is a 500-residue protein sequence, read N- to C-terminus: L-arabinose isomerase (500 aa).

Residues E306, E333, H349, and H448 each contribute to the Mn(2+) site.

It belongs to the arabinose isomerase family. Mn(2+) serves as cofactor.

It carries out the reaction beta-L-arabinopyranose = L-ribulose. It functions in the pathway carbohydrate degradation; L-arabinose degradation via L-ribulose; D-xylulose 5-phosphate from L-arabinose (bacterial route): step 1/3. Functionally, catalyzes the conversion of L-arabinose to L-ribulose. The protein is L-arabinose isomerase of Shewanella baltica (strain OS223).